The sequence spans 492 residues: Chitooligosaccharide oxidase (492 aa).

Positions 1-19 (MHFNTLTCVLVGLVAHTSA) are cleaved as a signal peptide. The region spanning 57–229 (LPFEPAAIAV…VELEFQTFAA (173 aa)) is the FAD-binding PCMH-type domain. Residues 94-154 (HSYTSLGFGG…GKRALAHGTC (61 aa)) constitute a cross-link (6-(S-cysteinyl)-8alpha-(pros-histidyl)-FAD (His-Cys)).

Belongs to the oxygen-dependent FAD-linked oxidoreductase family. FAD is required as a cofactor. In terms of processing, the FAD cofactor is bound via a bicovalent 6-S-cysteinyl, 8alpha-N1-histidyl FAD linkage.

The protein localises to the secreted. The catalysed reaction is N,N'-diacetylchitobiose + O2 = N,N'-diacetylchitobiono-1,5-lactone + H2O2. It carries out the reaction N,N',N''-triacetylchitotriose + O2 = N,N',N''-triacetylchitotriono-1,5-lactone + H2O2. The enzyme catalyses N,N',N'',N'''-tetraacetylchitotetraose + O2 = N,N',N'',N'''-tetraacetylchitotetraono-1,5-lactone + H2O2. Catalyzes the selective oxidation of C1 hydroxyl moieties on chitooligosaccharides with concomitant reduction of molecular oxygen to hydrogen peroxide. This results in the formation of the corresponding lactones, which typically undergo spontaneous hydrolysis. Chitooligosaccharides are homo- or heterooligomers of N-acetylglucosamine (GlcNAc) and D-glucosamine which are linked through beta-1,4-glycosidic bonds. For optimal substrate binding at least 2 GlcNAc units are needed, and chitooligosaccharide oxidase is most efficient on chitobiose, chitotriose and chitotetraose. The protein is Chitooligosaccharide oxidase of Gibberella zeae (strain ATCC MYA-4620 / CBS 123657 / FGSC 9075 / NRRL 31084 / PH-1) (Wheat head blight fungus).